A 288-amino-acid chain; its full sequence is Dichloromethane dehalogenase (288 aa).

The 83-residue stretch at 12-94 (KTLRLLYHPA…YVNEKFDGAG (83 aa)) folds into the GST N-terminal domain. The region spanning 100–252 (GTQERAQINQ…ASMFKRKTAV (153 aa)) is the GST C-terminal domain.

This sequence belongs to the GST superfamily. In terms of assembly, homohexamer.

The protein localises to the cytoplasm. The enzyme catalyses dichloromethane + H2O = formaldehyde + 2 chloride + 2 H(+). The protein operates within xenobiotic degradation; dichloromethane degradation. The polypeptide is Dichloromethane dehalogenase (dcmA) (Methylorubrum extorquens (strain DSM 6343 / CIP 106787 / DM4) (Methylobacterium extorquens)).